Here is a 144-residue protein sequence, read N- to C-terminus: Necrosis-inducing secreted protein 1 (144 aa).

The N-terminal stretch at 1–19 (MQFRASIAAAAGLFALANA) is a signal peptide. Residues N88, N126, and N133 are each glycosylated (N-linked (GlcNAc...) asparagine). Residues 103–132 (QYVVAAGLYSLYGASSSPTLSHYNVTVTVG) are BAK1/SERK3-binding.

Belongs to the NIS1 effector family.

Its subcellular location is the secreted. It is found in the host cytoplasm. Its function is as follows. Secreted effector that induces necrotic lesions in Nicotiana benthamiana. Interacts with the host receptor-like kinases (RLKs) BAK1/SERK3 and BKK1/SERK4, inhibits their kinase activity and suppresses INF1-induced pathogen-associated molecular pattern (PAMP)-triggered immunity (PTI) in N.benthamiana. Also interacts with the host receptor-like cytoplasmic kinase (RLCK) BIK1 and inhibits its kinase activity, thereby inhibiting PAMP-induced ROS generation. In PTI, phosphorylation relaying by RLKs and RLCKs is critical for the initiation of downstream signaling. The sequence is that of Necrosis-inducing secreted protein 1 from Colletotrichum higginsianum (strain IMI 349063) (Crucifer anthracnose fungus).